Here is a 223-residue protein sequence, read N- to C-terminus: Adenylate kinase (223 aa).

An ATP-binding site is contributed by 10 to 15; it reads GSGKGT. The NMP stretch occupies residues 30–59; sequence ESGAIFREHIGGGTELGKKAKAYIDRGDLV. Residues serine 31, arginine 36, 57–59, 84–87, and glutamine 91 contribute to the AMP site; these read DLV and GFPR. An LID region spans residues 125–164; it reads GRRLCKNNNNHPNNIFIEAIKPNGDVCRVCGGTLSSRSDD. ATP is bound at residue arginine 126. Arginine 161 and arginine 173 together coordinate AMP. Glycine 209 is a binding site for ATP.

The protein belongs to the adenylate kinase family. Monomer.

Its subcellular location is the cytoplasm. The enzyme catalyses AMP + ATP = 2 ADP. The protein operates within purine metabolism; AMP biosynthesis via salvage pathway; AMP from ADP: step 1/1. Functionally, catalyzes the reversible transfer of the terminal phosphate group between ATP and AMP. Plays an important role in cellular energy homeostasis and in adenine nucleotide metabolism. The chain is Adenylate kinase from Desulfovibrio desulfuricans (strain ATCC 27774 / DSM 6949 / MB).